The following is a 189-amino-acid chain: Protein Rex (189 aa).

Over residues 1–16 (MPKTRRGPRRSQRKRP) the composition is skewed to basic residues. The segment at 1-26 (MPKTRRGPRRSQRKRPPTPWPTSQGL) is disordered. The Nuclear localization signal, and RNA-binding (RxRE) signature appears at 2–18 (PKTRRGPRRSQRKRPPT). Residues 56–70 (RPAYIVTPYWPPVQS) form a homomultimerization region. At Ser-70 the chain carries Phosphoserine; by host. The Nuclear export signal motif lies at 82 to 93 (LSAQLYSSLSLG). Residues 87–189 (YSSLSLGSPP…PPSPGPSCPR (103 aa)) are disordered. Pro residues predominate over residues 115 to 125 (IQPPTFHPPSS). The homomultimerization stretch occupies residues 123–131 (PSSRPYANT). Thr-174 is subject to Phosphothreonine; by host. The residue at position 177 (Ser-177) is a Phosphoserine; by host. The segment covering 178 to 189 (FPPPSPGPSCPR) has biased composition (pro residues).

Belongs to the deltaretrovirus Rex protein family. Homomultimer. Multimeric assembly is essential for activity and involves XPO1. Binds to human XPO1 and KPNB1. Interacts (via N-terminal nuclear localization signal) with human NPM1. In terms of processing, phosphorylated.

The protein resides in the host nucleus. It is found in the host nucleolus. It localises to the host cytoplasm. Functionally, rex escorts unspliced gag-pro-pol and singly spliced env mRNAs out of the nucleus of infected cells. These mRNAs carry a recognition sequence called Rex responsive element (RxRE or XRE) located at the 3' region of the long terminal repeat (LTR). This function is essential since most HTLV proteins are translated from unspliced or partially spliced pre-mRNAs that cannot exit the nucleus by the pathway used by fully processed cellular mRNAs. Rex itself is translated from a fully spliced mRNA that probably readily exits the nucleus. Rex's nuclear localization signal (NLS) binds directly to KPNB1/importin beta-1 without previous binding to KPNA1/importin alpha-1. KPNB1 binds to the GDP bound form of RAN (Ran-GDP) and targets Rex to the nucleus. In the nucleus, the conversion from Ran-GDP to Ran-GTP dissociates Rex from KPNB1 and allows Rex's binding to the RRE in viral pre-mRNAs. Rex multimerizes on the RRE via cooperative assembly. This multimerization is critical for its full biological activity, since it may shield the viral RNA from being spliced or down-regulated, and probably exposes Rex's nuclear export signal (NES) to the surface. Rex can then form a complex with XPO1/CRM1, RANBP3 and Ran-GTP, leading to nuclear export of the complex. Conversion from Ran-GTP to Ran-GDP mediates dissociation of the Rex/RRE/XPO1/RANBP3/RAN complex, so that Rex can return to the nucleus for a subsequent round of export. The polypeptide is Protein Rex (Homo sapiens (Human)).